The chain runs to 225 residues: Cardiotrophin-like cytokine factor 1 (225 aa).

A signal peptide spans 1–27 (MDLRAGDSWGMLACLCTVLWHLPAVPA). N29 carries an N-linked (GlcNAc...) asparagine glycan.

It belongs to the IL-6 superfamily. As to quaternary structure, forms a heteromeric complex with cardiotrophin-like cytokine CRLF1/CLF-1; the CRLF1-CLCF1 complex is a ligand for the ciliary neurotrophic factor receptor/CNTFR. The CRLF1-CLCF1 heterodimer binds SORL1 (via N-terminal ectodomain); within this complex, the interaction is mediated predominantly by the CRLF1 moiety. The tripartite signaling complex formed by CRLF1, CLCF1 and CNTFR also binds SORL1.

The protein resides in the secreted. In complex with CRLF1, forms a heterodimeric neurotropic cytokine that plays a crucial role during neuronal development. Also stimulates B-cells. Binds to and activates the ILST/gp130 receptor. This Mus musculus (Mouse) protein is Cardiotrophin-like cytokine factor 1 (Clcf1).